The following is a 203-amino-acid chain: Imidazoleglycerol-phosphate dehydratase (203 aa).

Belongs to the imidazoleglycerol-phosphate dehydratase family.

It is found in the cytoplasm. It carries out the reaction D-erythro-1-(imidazol-4-yl)glycerol 3-phosphate = 3-(imidazol-4-yl)-2-oxopropyl phosphate + H2O. The protein operates within amino-acid biosynthesis; L-histidine biosynthesis; L-histidine from 5-phospho-alpha-D-ribose 1-diphosphate: step 6/9. This Deinococcus geothermalis (strain DSM 11300 / CIP 105573 / AG-3a) protein is Imidazoleglycerol-phosphate dehydratase.